A 487-amino-acid chain; its full sequence is UDP-N-acetylmuramoyl-L-alanyl-D-glutamate--2,6-diaminopimelate ligase (487 aa).

S30 provides a ligand contact to UDP-N-acetyl-alpha-D-muramoyl-L-alanyl-D-glutamate. Position 109–115 (109–115 (GTNGKTS)) interacts with ATP. UDP-N-acetyl-alpha-D-muramoyl-L-alanyl-D-glutamate-binding positions include 151–152 (TT), S178, and R186. The residue at position 218 (K218) is an N6-carboxylysine. Residues R379, 403–406 (DNPR), G455, and E459 each bind meso-2,6-diaminopimelate. Positions 403–406 (DNPR) match the Meso-diaminopimelate recognition motif motif.

It belongs to the MurCDEF family. MurE subfamily. The cofactor is Mg(2+). In terms of processing, carboxylation is probably crucial for Mg(2+) binding and, consequently, for the gamma-phosphate positioning of ATP.

It localises to the cytoplasm. The catalysed reaction is UDP-N-acetyl-alpha-D-muramoyl-L-alanyl-D-glutamate + meso-2,6-diaminopimelate + ATP = UDP-N-acetyl-alpha-D-muramoyl-L-alanyl-gamma-D-glutamyl-meso-2,6-diaminopimelate + ADP + phosphate + H(+). Its pathway is cell wall biogenesis; peptidoglycan biosynthesis. Functionally, catalyzes the addition of meso-diaminopimelic acid to the nucleotide precursor UDP-N-acetylmuramoyl-L-alanyl-D-glutamate (UMAG) in the biosynthesis of bacterial cell-wall peptidoglycan. The chain is UDP-N-acetylmuramoyl-L-alanyl-D-glutamate--2,6-diaminopimelate ligase from Alkaliphilus oremlandii (strain OhILAs) (Clostridium oremlandii (strain OhILAs)).